The chain runs to 97 residues: Exodeoxyribonuclease 7 small subunit (97 aa).

Residues 1-22 are disordered; it reads MAKTASPGATPPGNGTEPLPDN.

The protein belongs to the XseB family. In terms of assembly, heterooligomer composed of large and small subunits.

It localises to the cytoplasm. The catalysed reaction is Exonucleolytic cleavage in either 5'- to 3'- or 3'- to 5'-direction to yield nucleoside 5'-phosphates.. Its function is as follows. Bidirectionally degrades single-stranded DNA into large acid-insoluble oligonucleotides, which are then degraded further into small acid-soluble oligonucleotides. The polypeptide is Exodeoxyribonuclease 7 small subunit (Burkholderia lata (strain ATCC 17760 / DSM 23089 / LMG 22485 / NCIMB 9086 / R18194 / 383)).